The sequence spans 650 residues: Chaperone protein HtpG (650 aa).

The a; substrate-binding stretch occupies residues 1–349 (MSKTVKKFET…SSDLPLNVSR (349 aa)). The interval 350-566 (EILQEDVQIK…EHGLNANMER (217 aa)) is b. The c stretch occupies residues 567 to 650 (ILRAMNQTVP…VADGKAAAGE (84 aa)).

It belongs to the heat shock protein 90 family. In terms of assembly, homodimer.

It is found in the cytoplasm. Its function is as follows. Molecular chaperone. Has ATPase activity. The protein is Chaperone protein HtpG of Geobacter sulfurreducens (strain ATCC 51573 / DSM 12127 / PCA).